The chain runs to 494 residues: WD repeat-containing protein 37 (494 aa).

The segment at 1–38 (MPTESGSWAAARQTKQKRKSHSLSIKRTNSSEQDRPGL) is disordered. Positions 22 to 31 (SLSIKRTNSS) are enriched in polar residues. WD repeat units lie at residues 154–194 (GHRD…CLIK) and 197–236 (GHAG…PTPQ). Residues 236 to 266 (QPTADTSISGEEEVDFSDKDENDGDGDASSD) form a disordered region. A compositionally biased stretch (acidic residues) spans 245-263 (GEEEVDFSDKDENDGDGDA). 5 WD repeats span residues 279 to 318 (SHQG…LVHS), 321 to 360 (GHDQ…IHSV), 365 to 403 (GHTD…SPIA), 406 to 445 (RTDS…LARL), and 452 to 493 (GHRR…LLQE).

The protein resides in the cytoplasm. It is found in the nucleus. In Xenopus tropicalis (Western clawed frog), this protein is WD repeat-containing protein 37 (wdr37).